The primary structure comprises 189 residues: Thymidine kinase (189 aa).

Residues 9 to 16 and 85 to 88 contribute to the ATP site; these read GTMNSGKS and DEAQ. The active-site Proton acceptor is the glutamate 86. Zn(2+)-binding residues include cysteine 143, cysteine 146, cysteine 180, and histidine 183.

Belongs to the thymidine kinase family. In terms of assembly, homotetramer.

It localises to the cytoplasm. It carries out the reaction thymidine + ATP = dTMP + ADP + H(+). This chain is Thymidine kinase, found in Lactococcus lactis subsp. lactis (strain IL1403) (Streptococcus lactis).